Reading from the N-terminus, the 75-residue chain is UPF0512 protein C (75 aa).

Belongs to the UPF0512 family.

The protein is UPF0512 protein C of Dictyostelium discoideum (Social amoeba).